The chain runs to 169 residues: Short form salivary protein D7R3 (169 aa).

The N-terminal stretch at 1 to 21 (MFGKLLPCAILVWCLFSLGQA) is a signal peptide. Intrachain disulfides connect cysteine 30-cysteine 62, cysteine 43-cysteine 168, and cysteine 101-cysteine 120. Glutamate 31 and arginine 46 together coordinate noradrenaline. Glutamate 31 provides a ligand contact to serotonin. The serotonin site is built by histidine 59, tyrosine 118, aspartate 135, and glutamate 138. Histamine is bound by residues tyrosine 118, aspartate 135, and glutamate 138. Noradrenaline-binding residues include aspartate 135 and glutamate 138.

It belongs to the PBP/GOBP family. Female saliva (at protein level). Female salivary gland. Low-level expression in female carcass without salivary glands. Not detected in male tissues.

The protein localises to the secreted. Its function is as follows. Modulates blood feeding of female mosquitoes on vertebrate species by binding and sequestering different mediators involved in the host response. Binds serotonin, noradrenaline, histamine and adrenaline. Inhibits histamine-, serotonin- and noradrenaline-induced smooth muscle contraction. Exhibits vasodilating activity. This Anopheles gambiae (African malaria mosquito) protein is Short form salivary protein D7R3.